Here is a 619-residue protein sequence, read N- to C-terminus: Vitamin B12 transporter BtuB (619 aa).

The first 25 residues, 1-25 (MINKKRLLLSTVSIMVISGWNQASA), serve as a signal peptide directing secretion. Residues 31 to 38 (DSLVVTAS) carry the TonB box motif. The region spanning 43–157 (PISSILAPYT…IGGVINIITT (115 aa)) is the TBDR plug domain. Residues Leu88, Ser90, and 115–116 (IS) contribute to the cyanocob(III)alamin site. The TBDR beta-barrel domain maps to 160 to 619 (KLGTSLNVGI…EYYLTGSYNF (460 aa)). The next 3 membrane-spanning stretches (beta stranded) occupy residues 163 to 170 (TSLNVGIG), 174 to 183 (YQTYDGATQQ), and 189 to 200 (TVLTAAANYTYT). Ca(2+)-binding residues include Asp204, Gln216, Asp218, and Asp220. The next 2 membrane-spanning stretches (beta stranded) occupy residues 222-232 (FMSKMLWLGVD) and 237-253 (EQVS…NRTS). Residues Tyr254 and Asp255 each coordinate Ca(2+). Cyanocob(III)alamin is bound at residue Ala256. Asp268 lines the Ca(2+) pocket. 17 beta stranded membrane-spanning segments follow: residues 270–284 (RELY…VRFN), 286–303 (GIYS…KDYN), 316–332 (SLND…NTFQ), 335–344 (QGIVSTGVDF), 360–376 (KTVR…QQLK), 378–388 (FILEGAIRSDK), 392–407 (AGWN…WEFI), 410–424 (YRLI…KAPT), 441–450 (ESKQWEGGIE), 456–465 (LTWRMTVYRN), 478–495 (YYNI…TGLI), 499–514 (MFQH…PRNS), 522–534 (RRAK…QLDW), 540–556 (DWGL…DKDF), 563–577 (RVKL…LTVS), 590–601 (IANLLDKDYETV), and 607–619 (PGRE…SYNF). Ser316 lines the cyanocob(III)alamin pocket. Arg522 is a binding site for cyanocob(III)alamin. The TonB C-terminal box signature appears at 602-619 (YGYRIPGREYYLTGSYNF).

It belongs to the TonB-dependent receptor family. BtuB (TC 1.B.14.3.1) subfamily.

Its subcellular location is the cell outer membrane. Involved in the active translocation of vitamin B12 (cyanocobalamin) across the outer membrane to the periplasmic space. It derives its energy for transport by interacting with the trans-periplasmic membrane protein TonB. This chain is Vitamin B12 transporter BtuB, found in Photorhabdus laumondii subsp. laumondii (strain DSM 15139 / CIP 105565 / TT01) (Photorhabdus luminescens subsp. laumondii).